The sequence spans 161 residues: SsrA-binding protein (161 aa).

It belongs to the SmpB family.

It is found in the cytoplasm. Required for rescue of stalled ribosomes mediated by trans-translation. Binds to transfer-messenger RNA (tmRNA), required for stable association of tmRNA with ribosomes. tmRNA and SmpB together mimic tRNA shape, replacing the anticodon stem-loop with SmpB. tmRNA is encoded by the ssrA gene; the 2 termini fold to resemble tRNA(Ala) and it encodes a 'tag peptide', a short internal open reading frame. During trans-translation Ala-aminoacylated tmRNA acts like a tRNA, entering the A-site of stalled ribosomes, displacing the stalled mRNA. The ribosome then switches to translate the ORF on the tmRNA; the nascent peptide is terminated with the 'tag peptide' encoded by the tmRNA and targeted for degradation. The ribosome is freed to recommence translation, which seems to be the essential function of trans-translation. This chain is SsrA-binding protein, found in Haemophilus influenzae (strain 86-028NP).